Here is a 249-residue protein sequence, read N- to C-terminus: uncharacterized protein (249 aa).

An N-terminal signal peptide occupies residues 1 to 25; it reads MRYLNTKNIIAAGVLLSCMSSIAWG.

Belongs to the periplasmic pilus chaperone family.

The protein resides in the periplasm. In terms of biological role, could be required for the biogenesis of a putative fimbria. This is an uncharacterized protein from Escherichia coli (strain K12).